A 382-amino-acid polypeptide reads, in one-letter code: Sphingosine kinase 1 (382 aa).

The 148-residue stretch at 12–159 (PRPCRVLVLL…MNLLSLHTAS (148 aa)) folds into the DAGKc domain. ATP is bound by residues 22 to 24 (NPQ) and 54 to 58 (TERKN). Substrate is bound at residue 79 to 82 (SGDG). Catalysis depends on Asp-81, which acts as the Proton donor/acceptor. Residues Glu-86 and 111–113 (GSG) contribute to the ATP site. Short sequence motifs (nuclear export signal) lie at residues 147-155 (LSPMNLLSL) and 161-169 (LRLYSVLSL). Asp-178 provides a ligand contact to substrate. 2 residues coordinate ATP: Arg-185 and Arg-191. A Phosphothreonine modification is found at Thr-193. Ser-225 is subject to Phosphoserine. Position 340-342 (340-342 (DGE)) interacts with ATP.

Interacts with ACY1. Binds to calmodulin. Interacts with SPHKAP. Interacts with CIB1, the interaction occurs in a calcium-dependent manner. Interacts with TRAF2. Interacts with EEF1A1; the interaction enhances SPHK1 kinase activity. The cofactor is Mg(2+). Widely expressed. Expressed in brain (at protein level). Detected in neurons.

The protein resides in the cytoplasm. It localises to the endosome membrane. The protein localises to the nucleus. Its subcellular location is the cell membrane. It is found in the synapse. It catalyses the reaction a sphingoid base + ATP = a sphingoid 1-phosphate + ADP + H(+). The enzyme catalyses L-seryl-[protein] + acetyl-CoA = O-acetyl-L-seryl-[protein] + CoA. It carries out the reaction sphinganine + ATP = sphinganine 1-phosphate + ADP + H(+). The catalysed reaction is sphing-4-enine + ATP = sphing-4-enine 1-phosphate + ADP + H(+). It catalyses the reaction 1-O-hexadecyl-2-amino-sn-glycerol + ATP = 1-O-hexadecyl-2-desoxy-2-amino-sn-glycero-3-phosphate + ADP + H(+). Acetyltransferase activity increases in presence of the kinase substrate, sphingosine. In Purkinje cells, kinase activity on sphingosine increases in presence of VEGFA. In neurons, kinase activity increases during the first 24h in presence of Amyloid-beta protein 42 to decrease after 96h. Functionally, catalyzes the phosphorylation of sphingosine to form sphingosine 1-phosphate (SPP), a lipid mediator with both intra- and extracellular functions. Also acts on D-erythro-sphingosine and to a lesser extent sphinganine, but not other lipids, such as D,L-threo-dihydrosphingosine, N,N-dimethylsphingosine, diacylglycerol, ceramide, or phosphatidylinositol. In contrast to proapoptotic SPHK2, has a negative effect on intracellular ceramide levels, enhances cell growth and inhibits apoptosis. Involved in the regulation of inflammatory response and neuroinflammation. Via the product sphingosine 1-phosphate, stimulates TRAF2 E3 ubiquitin ligase activity, and promotes activation of NF-kappa-B in response to TNF signaling. In response to TNF and in parallel to NF-kappa-B activation, negatively regulates RANTES induction through p38 MAPK signaling pathway. Involved in endocytic membrane trafficking induced by sphingosine, recruited to dilate endosomes, also plays a role on later stages of endosomal maturation and membrane fusion independently of its kinase activity. In Purkinje cells, seems to be also involved in the regulation of autophagosome-lysosome fusion upon VEGFA. Its function is as follows. Has serine acetyltransferase activity on PTGS2/COX2 in an acetyl-CoA dependent manner. The acetyltransferase activity increases in presence of the kinase substrate, sphingosine. During neuroinflammation, through PTGS2 acetylation, promotes neuronal secretion of specialized preresolving mediators (SPMs), especially 15-R-lipoxin A4, which results in an increase of phagocytic microglia. The protein is Sphingosine kinase 1 of Mus musculus (Mouse).